A 544-amino-acid polypeptide reads, in one-letter code: BTB/POZ domain-containing protein At2g13690 (544 aa).

2 disordered regions span residues 34 to 66 (ASPDTRSISSRNHIPAKSQQQRPKLVPCSPQSS) and 82 to 111 (LSPGRVSPIDSDPTVTTMQETETTQEEEDD). Positions 37-55 (DTRSISSRNHIPAKSQQQR) are enriched in polar residues. Residues 93 to 103 (DPTVTTMQETE) are compositionally biased toward low complexity. The region spanning 142 to 225 (YDARLSLKGR…MFEESNVIIK (84 aa)) is the BTB domain.

The protein operates within protein modification; protein ubiquitination. Functionally, may act as a substrate-specific adapter of an E3 ubiquitin-protein ligase complex (CUL3-RBX1-BTB) which mediates the ubiquitination and subsequent proteasomal degradation of target proteins. This Arabidopsis thaliana (Mouse-ear cress) protein is BTB/POZ domain-containing protein At2g13690 (PRL1-IFG).